We begin with the raw amino-acid sequence, 253 residues long: Imidazole glycerol phosphate synthase subunit HisF (253 aa).

Residues aspartate 11 and aspartate 130 contribute to the active site.

The protein belongs to the HisA/HisF family. Heterodimer of HisH and HisF.

The protein resides in the cytoplasm. The catalysed reaction is 5-[(5-phospho-1-deoxy-D-ribulos-1-ylimino)methylamino]-1-(5-phospho-beta-D-ribosyl)imidazole-4-carboxamide + L-glutamine = D-erythro-1-(imidazol-4-yl)glycerol 3-phosphate + 5-amino-1-(5-phospho-beta-D-ribosyl)imidazole-4-carboxamide + L-glutamate + H(+). It functions in the pathway amino-acid biosynthesis; L-histidine biosynthesis; L-histidine from 5-phospho-alpha-D-ribose 1-diphosphate: step 5/9. IGPS catalyzes the conversion of PRFAR and glutamine to IGP, AICAR and glutamate. The HisF subunit catalyzes the cyclization activity that produces IGP and AICAR from PRFAR using the ammonia provided by the HisH subunit. The sequence is that of Imidazole glycerol phosphate synthase subunit HisF from Cereibacter sphaeroides (strain ATCC 17025 / ATH 2.4.3) (Rhodobacter sphaeroides).